A 368-amino-acid polypeptide reads, in one-letter code: Glycine betaine monooxygenase reductase subunit (368 aa).

The 104-residue stretch at 16–119 folds into the FAD-binding FR-type domain; that stretch reads NGRHNVRCVK…HGPVGDFNVI (104 aa). The 2Fe-2S ferredoxin-type domain maps to 284–368; that stretch reads LQVEFSNSGK…TPKSHVAIEF (85 aa). Residues Cys318, Cys323, Cys326, and Cys356 each coordinate [2Fe-2S] cluster.

The protein in the N-terminal section; belongs to the FAD-binding oxidoreductase type 6 family. In terms of assembly, monomer. The system is composed of an oxygenase subunit (BmoA) and a reductase subunit (BmoB). Maximal specific activity is obtained when the ratio of BmoA to BmoB is 5:1. Requires FAD as cofactor. It depends on [2Fe-2S] cluster as a cofactor.

It carries out the reaction glycine betaine + NADH + O2 + H(+) = N,N-dimethylglycine + formaldehyde + NAD(+) + H2O. Its function is as follows. Involved in degradation of glycine betaine. Part of a Rieske-type oxygenase system that catalyzes the conversion of glycine betaine (GB) to dimethylglycine (DMG). This subunit is the ferredoxin reductase component of the system. NADH is the preferred electron donor. The polypeptide is Glycine betaine monooxygenase reductase subunit (Chromohalobacter salexigens (strain ATCC BAA-138 / DSM 3043 / CIP 106854 / NCIMB 13768 / 1H11)).